We begin with the raw amino-acid sequence, 495 residues long: UDP-N-acetylmuramoyl-L-alanyl-D-glutamate--2,6-diaminopimelate ligase (495 aa).

UDP-N-acetyl-alpha-D-muramoyl-L-alanyl-D-glutamate-binding positions include L28, S30, and 45-47 (HRV). ATP is bound at residue 117-123 (GTNGKTT). Residues N158, 159–160 (TT), S186, Q192, and R194 each bind UDP-N-acetyl-alpha-D-muramoyl-L-alanyl-D-glutamate. K226 is subject to N6-carboxylysine. Meso-2,6-diaminopimelate contacts are provided by residues R394, 418-421 (DNPR), G469, and E473. The Meso-diaminopimelate recognition motif motif lies at 418-421 (DNPR).

This sequence belongs to the MurCDEF family. MurE subfamily. Mg(2+) serves as cofactor. Post-translationally, carboxylation is probably crucial for Mg(2+) binding and, consequently, for the gamma-phosphate positioning of ATP.

It is found in the cytoplasm. It catalyses the reaction UDP-N-acetyl-alpha-D-muramoyl-L-alanyl-D-glutamate + meso-2,6-diaminopimelate + ATP = UDP-N-acetyl-alpha-D-muramoyl-L-alanyl-gamma-D-glutamyl-meso-2,6-diaminopimelate + ADP + phosphate + H(+). It participates in cell wall biogenesis; peptidoglycan biosynthesis. Catalyzes the addition of meso-diaminopimelic acid to the nucleotide precursor UDP-N-acetylmuramoyl-L-alanyl-D-glutamate (UMAG) in the biosynthesis of bacterial cell-wall peptidoglycan. This Histophilus somni (strain 129Pt) (Haemophilus somnus) protein is UDP-N-acetylmuramoyl-L-alanyl-D-glutamate--2,6-diaminopimelate ligase.